The sequence spans 337 residues: Ribosomal RNA small subunit methyltransferase H (337 aa).

Residues 45-47 (GGH), Asp64, Phe91, Asp120, and Gln127 contribute to the S-adenosyl-L-methionine site.

Belongs to the methyltransferase superfamily. RsmH family.

The protein localises to the cytoplasm. The catalysed reaction is cytidine(1402) in 16S rRNA + S-adenosyl-L-methionine = N(4)-methylcytidine(1402) in 16S rRNA + S-adenosyl-L-homocysteine + H(+). Functionally, specifically methylates the N4 position of cytidine in position 1402 (C1402) of 16S rRNA. This is Ribosomal RNA small subunit methyltransferase H from Corynebacterium glutamicum (strain ATCC 13032 / DSM 20300 / JCM 1318 / BCRC 11384 / CCUG 27702 / LMG 3730 / NBRC 12168 / NCIMB 10025 / NRRL B-2784 / 534).